Consider the following 173-residue polypeptide: Small ribosomal subunit protein uS9 (173 aa).

The segment covering 1–15 has biased composition (polar residues); it reads MTDTPTENLENTEVT. Disordered regions lie at residues 1 to 26 and 135 to 173; these read MTDT…EIAY and EASR…YSKR. Over residues 154–173 the composition is skewed to basic residues; that stretch reads KERKKAGLKKARKAPQYSKR.

It belongs to the universal ribosomal protein uS9 family.

The sequence is that of Small ribosomal subunit protein uS9 from Cutibacterium acnes (strain DSM 16379 / KPA171202) (Propionibacterium acnes).